A 264-amino-acid polypeptide reads, in one-letter code: MNKVTTKTLFEKKQKGEKITMITAYDYTFAKIFDSCSVDILLVGDSLGMVILGYDSTIPVTMDDMEHHVRAVSRGAKYSMVVADMPFLSYHTTIEEAVKNAGRLIRAGAYAVKMEGCDDVYDKIEAVIKAQIPVMGHLGLTPQSVNIFGGYDLRAKEEAEAKKLVEDAKKLEKAGVFAIVLEKVPSHVAKEVQRSLNVPVIGIGAGPYCDGQVLVCYDMLGMYEDFKPKFVKRYAEVGNMIKDAVTRYIEEVKKGEFPGKEHSY.

Mg(2+) is bound by residues D45 and D84. Residues 45-46 (DS), D84, and K113 contribute to the 3-methyl-2-oxobutanoate site. E115 provides a ligand contact to Mg(2+). The active-site Proton acceptor is E182.

The protein belongs to the PanB family. Homodecamer; pentamer of dimers. Mg(2+) is required as a cofactor.

It localises to the cytoplasm. The catalysed reaction is 3-methyl-2-oxobutanoate + (6R)-5,10-methylene-5,6,7,8-tetrahydrofolate + H2O = 2-dehydropantoate + (6S)-5,6,7,8-tetrahydrofolate. It functions in the pathway cofactor biosynthesis; (R)-pantothenate biosynthesis; (R)-pantoate from 3-methyl-2-oxobutanoate: step 1/2. Its function is as follows. Catalyzes the reversible reaction in which hydroxymethyl group from 5,10-methylenetetrahydrofolate is transferred onto alpha-ketoisovalerate to form ketopantoate. This is 3-methyl-2-oxobutanoate hydroxymethyltransferase from Caldicellulosiruptor bescii (strain ATCC BAA-1888 / DSM 6725 / KCTC 15123 / Z-1320) (Anaerocellum thermophilum).